We begin with the raw amino-acid sequence, 191 residues long: Gamma-glutamylaminecyclotransferase B (191 aa).

Substrate is bound at residue Tyr7–Leu10. Glu82 functions as the Proton acceptor in the catalytic mechanism. Residues Ser155–Thr178 are compositionally biased toward polar residues. Residues Ser155–Gln191 form a disordered region.

Belongs to the gamma-glutamylcyclotransferase family.

It carries out the reaction epsilon-(gamma-L-glutamyl)-L-lysine = 5-oxo-L-proline + L-lysine. May contribute to degradation of proteins cross-linked by transglutaminases by degrading the cross-link between a lysine and a glutamic acid residue. Catalyzes the formation of 5-oxo-L-proline from L-gamma-glutamyl-L-epsilon-lysine. The polypeptide is Gamma-glutamylaminecyclotransferase B (ggact.2) (Danio rerio (Zebrafish)).